The primary structure comprises 545 residues: Cytosolic Fe-S cluster assembly factor NAR1 (545 aa).

Cysteine 20, cysteine 72, cysteine 75, cysteine 78, cysteine 186, and cysteine 241 together coordinate [4Fe-4S] cluster. Positions 401-438 are disordered; it reads PSTKQTSTVKANPLASRRRARLASKTDGTASSNNATQD. A compositionally biased stretch (polar residues) spans 426-438; that stretch reads TDGTASSNNATQD. Residues cysteine 453 and cysteine 457 each coordinate [4Fe-4S] cluster.

Belongs to the NARF family.

Its function is as follows. Component of the cytosolic Fe/S protein assembly machinery. Required for maturation of extramitochondrial Fe/S proteins. May play a role in the transfer of pre-assembled Fe/S clusters to target apoproteins. The chain is Cytosolic Fe-S cluster assembly factor NAR1 (NAR1) from Debaryomyces hansenii (strain ATCC 36239 / CBS 767 / BCRC 21394 / JCM 1990 / NBRC 0083 / IGC 2968) (Yeast).